A 441-amino-acid polypeptide reads, in one-letter code: uncharacterized protein (441 aa).

Residue Gly57–Thr64 participates in ATP binding.

This is an uncharacterized protein from Methanocaldococcus jannaschii (strain ATCC 43067 / DSM 2661 / JAL-1 / JCM 10045 / NBRC 100440) (Methanococcus jannaschii).